The chain runs to 153 residues: Endoribonuclease YbeY (153 aa).

3 residues coordinate Zn(2+): His113, His117, and His123.

This sequence belongs to the endoribonuclease YbeY family. It depends on Zn(2+) as a cofactor.

It localises to the cytoplasm. Its function is as follows. Single strand-specific metallo-endoribonuclease involved in late-stage 70S ribosome quality control and in maturation of the 3' terminus of the 16S rRNA. This Aliivibrio salmonicida (strain LFI1238) (Vibrio salmonicida (strain LFI1238)) protein is Endoribonuclease YbeY.